The following is a 190-amino-acid chain: GTP cyclohydrolase 1 (190 aa).

C75, H78, and C146 together coordinate Zn(2+).

It belongs to the GTP cyclohydrolase I family. In terms of assembly, homomer.

The catalysed reaction is GTP + H2O = 7,8-dihydroneopterin 3'-triphosphate + formate + H(+). Its pathway is cofactor biosynthesis; 7,8-dihydroneopterin triphosphate biosynthesis; 7,8-dihydroneopterin triphosphate from GTP: step 1/1. The protein is GTP cyclohydrolase 1 of Campylobacter lari (strain RM2100 / D67 / ATCC BAA-1060).